A 142-amino-acid polypeptide reads, in one-letter code: Hemoglobin subunit alpha (142 aa).

One can recognise a Globin domain in the interval 2 to 142; that stretch reads VLSPADKSNV…VSTVLTSKYR (141 aa). At Ser-4 the chain carries Phosphoserine. N6-succinyllysine occurs at positions 8 and 12. Lys-17 is subject to N6-acetyllysine; alternate. Lys-17 carries the N6-succinyllysine; alternate modification. Tyr-25 is modified (phosphotyrosine). The residue at position 36 (Ser-36) is a Phosphoserine. Position 41 is an N6-succinyllysine (Lys-41). Ser-50 bears the Phosphoserine mark. His-59 is a binding site for O2. His-88 serves as a coordination point for heme b. At Ser-103 the chain carries Phosphoserine. Phosphothreonine is present on Thr-109. Ser-125 and Ser-132 each carry phosphoserine. 2 positions are modified to phosphothreonine: Thr-135 and Thr-138. Ser-139 carries the post-translational modification Phosphoserine.

The protein belongs to the globin family. In terms of assembly, heterotetramer of two alpha chains and two beta chains. In terms of tissue distribution, red blood cells.

Functionally, involved in oxygen transport from the lung to the various peripheral tissues. Its function is as follows. Hemopressin acts as an antagonist peptide of the cannabinoid receptor CNR1. Hemopressin-binding efficiently blocks cannabinoid receptor CNR1 and subsequent signaling. This Ateles geoffroyi (Black-handed spider monkey) protein is Hemoglobin subunit alpha (HBA).